Reading from the N-terminus, the 256-residue chain is tRNA pseudouridine synthase A (256 aa).

Residue aspartate 55 is the Nucleophile of the active site. Tyrosine 113 serves as a coordination point for substrate.

It belongs to the tRNA pseudouridine synthase TruA family. As to quaternary structure, homodimer.

It catalyses the reaction uridine(38/39/40) in tRNA = pseudouridine(38/39/40) in tRNA. Formation of pseudouridine at positions 38, 39 and 40 in the anticodon stem and loop of transfer RNAs. In Ligilactobacillus salivarius (strain UCC118) (Lactobacillus salivarius), this protein is tRNA pseudouridine synthase A.